Consider the following 261-residue polypeptide: Cytochrome c oxidase subunit 3 (261 aa).

Residues 1 to 15 (MAHQAHAYHMVDPSP) lie on the Mitochondrial matrix side of the membrane. The helical transmembrane segment at 16–34 (WPLTGAIAALLLTSGTAVW) threads the bilayer. Residues 35 to 40 (FHFHSL) are Mitochondrial intermembrane-facing. A helical membrane pass occupies residues 41 to 66 (TLLTLGNILLLLTMYQWWRDIIREGT). Residues 67–72 (FQGHHT) lie on the Mitochondrial matrix side of the membrane. The chain crosses the membrane as a helical span at residues 73–105 (PPVQKGLRYGMILFITSEVFFFLGFFWAFYHAS). Residues 106-128 (LAPTPELGGCWPPAGITTLDPFE) are Mitochondrial intermembrane-facing. Residues 129 to 152 (VPLLNTAVLLASGVTVTWAHHSIM) form a helical membrane-spanning segment. The Mitochondrial matrix portion of the chain corresponds to 153 to 155 (EGE). Residues 156–183 (RKQTIQALTLTILLGFYFTFLQGMEYYE) form a helical membrane-spanning segment. Topologically, residues 184-190 (APFTIAD) are mitochondrial intermembrane. A helical membrane pass occupies residues 191–223 (GVYGSTFFVATGFHGLHVIIGSTFLAVCLLRQV). The Mitochondrial matrix portion of the chain corresponds to 224-232 (QYHFTSEHH). A helical membrane pass occupies residues 233–256 (FGFEAAAWYWHFVDVVWLFLYVSI). Residues 257-261 (YWWGS) are Mitochondrial intermembrane-facing.

It belongs to the cytochrome c oxidase subunit 3 family. Component of the cytochrome c oxidase (complex IV, CIV), a multisubunit enzyme composed of 14 subunits. The complex is composed of a catalytic core of 3 subunits MT-CO1, MT-CO2 and MT-CO3, encoded in the mitochondrial DNA, and 11 supernumerary subunits COX4I, COX5A, COX5B, COX6A, COX6B, COX6C, COX7A, COX7B, COX7C, COX8 and NDUFA4, which are encoded in the nuclear genome. The complex exists as a monomer or a dimer and forms supercomplexes (SCs) in the inner mitochondrial membrane with NADH-ubiquinone oxidoreductase (complex I, CI) and ubiquinol-cytochrome c oxidoreductase (cytochrome b-c1 complex, complex III, CIII), resulting in different assemblies (supercomplex SCI(1)III(2)IV(1) and megacomplex MCI(2)III(2)IV(2)).

It localises to the mitochondrion inner membrane. The enzyme catalyses 4 Fe(II)-[cytochrome c] + O2 + 8 H(+)(in) = 4 Fe(III)-[cytochrome c] + 2 H2O + 4 H(+)(out). Functionally, component of the cytochrome c oxidase, the last enzyme in the mitochondrial electron transport chain which drives oxidative phosphorylation. The respiratory chain contains 3 multisubunit complexes succinate dehydrogenase (complex II, CII), ubiquinol-cytochrome c oxidoreductase (cytochrome b-c1 complex, complex III, CIII) and cytochrome c oxidase (complex IV, CIV), that cooperate to transfer electrons derived from NADH and succinate to molecular oxygen, creating an electrochemical gradient over the inner membrane that drives transmembrane transport and the ATP synthase. Cytochrome c oxidase is the component of the respiratory chain that catalyzes the reduction of oxygen to water. Electrons originating from reduced cytochrome c in the intermembrane space (IMS) are transferred via the dinuclear copper A center (CU(A)) of subunit 2 and heme A of subunit 1 to the active site in subunit 1, a binuclear center (BNC) formed by heme A3 and copper B (CU(B)). The BNC reduces molecular oxygen to 2 water molecules using 4 electrons from cytochrome c in the IMS and 4 protons from the mitochondrial matrix. The protein is Cytochrome c oxidase subunit 3 (mt-co3) of Oncorhynchus mykiss (Rainbow trout).